Reading from the N-terminus, the 370-residue chain is Chloromuconate cycloisomerase (370 aa).

Catalysis depends on K165, which acts as the Proton acceptor. Mn(2+) contacts are provided by D194, E220, and D245. The active-site Proton donor is the E323.

It belongs to the mandelate racemase/muconate lactonizing enzyme family. Mn(2+) is required as a cofactor.

The catalysed reaction is 2-[(2R)-2-chloro-2,5-dihydro-5-oxofuryl]acetate = 3-chloro-cis,cis-muconate + H(+). It functions in the pathway aromatic compound metabolism; 3-chlorocatechol degradation. The polypeptide is Chloromuconate cycloisomerase (tfdD) (Delftia acidovorans (Pseudomonas acidovorans)).